Reading from the N-terminus, the 561-residue chain is Shugoshin 1 (561 aa).

The necessary for interaction with PPP2CA and PPP2R1A stretch occupies residues 1 to 176 (MAKERCLKKS…DTLGVDFDSG (176 aa)). The stretch at 7–89 (LKKSFQDSLE…DIILQLRKEC (83 aa)) forms a coiled coil. Ser-14 is modified (phosphoserine; by NEK2). Residues 192–200 (RSSLKKHCN) carry the D-box 1 motif. Ser-256 is modified (phosphoserine). Disordered regions lie at residues 260–331 (IQPG…SVSS) and 348–441 (FRQK…HLSL). The span at 267-296 (KTKEDILESKSEQTKSKQRDTQERKREEKR) shows a compositional bias: basic and acidic residues. Positions 273 to 313 (LESKSEQTKSKQRDTQERKREEKRKANRRKSKRMSKYKENK) form a coiled coil. The span at 297–307 (KANRRKSKRMS) shows a compositional bias: basic residues. Over residues 308-318 (KYKENKSENKK) the composition is skewed to basic and acidic residues. Positions 310–312 (KEN) match the KEN box motif. Residues 364-375 (SEVSLCESSGSG) show a composition bias toward low complexity. Residues 388 to 398 (YIQNPTSNSDR) show a composition bias toward polar residues. Residues 410–421 (KYTDEKETEGSK) show a composition bias toward basic and acidic residues. Over residues 422-433 (PTKTPTTTPPET) the composition is skewed to low complexity. Ser-436 carries the post-translational modification Phosphoserine. The D-box 2 motif lies at 438–446 (HLSLKDITN). A PXVXL/I motif motif is present at residues 451–455 (PVVKI). A D-box 3 motif is present at residues 457-465 (RLSLSPKKN). A Phosphoserine; by NEK2 modification is found at Ser-507.

Belongs to the shugoshin family. Interacts with PPP2CA (or PPP2CB), PPP2R1B, PPP2R5A, PPP2R5B, PPP2R5C, PPP2R5D, PPP2R5E, SET, LRRC59, RBM10 (or RBM5), RPL10A, RPL28, RPL7, RPL7A and RPLP1. Interaction with protein phosphatase 2A occurs most probably through direct binding to the regulatory B56 subunits: PPP2R1B, PPP2R5A, PPP2R5B, PPP2R5C, PPP2R5D, PPP2R5E. Interacts with PPP2R1A and NEK2. Isoform 3 interacts with PLK1. Interacts with CDCA8. Ubiquitinated and degraded during mitotic exit by APC/C-Cdh1. Post-translationally, phosphorylation by NEK2 is essential for chromosome congression in mitosis and for the proper attachment of spindle microtubule to the kinetochore. Phosphorylated by PLK1 and AUKRB. Widely expressed. Highly expressed in testis. Expressed in lung, small intestine, breast, liver and placenta. Strongly overexpressed in 90% of breast cancers tested.

The protein resides in the nucleus. The protein localises to the chromosome. Its subcellular location is the centromere. It localises to the kinetochore. It is found in the cytoplasm. The protein resides in the cytoskeleton. The protein localises to the spindle pole. Its subcellular location is the microtubule organizing center. It localises to the centrosome. It is found in the nucleus speckle. Plays a central role in chromosome cohesion during mitosis by preventing premature dissociation of cohesin complex from centromeres after prophase, when most of cohesin complex dissociates from chromosomes arms. May act by preventing phosphorylation of the STAG2 subunit of cohesin complex at the centromere, ensuring cohesin persistence at centromere until cohesin cleavage by ESPL1/separase at anaphase. Essential for proper chromosome segregation during mitosis and this function requires interaction with PPP2R1A. Its phosphorylated form is necessary for chromosome congression and for the proper attachment of spindle microtubule to the kinetochore. Necessary for kinetochore localization of PLK1 and CENPF. May play a role in the tension sensing mechanism of the spindle-assembly checkpoint by regulating PLK1 kinetochore affinity. Isoform 3 plays a role in maintaining centriole cohesion involved in controlling spindle pole integrity. Involved in centromeric enrichment of AUKRB in prometaphase. This Homo sapiens (Human) protein is Shugoshin 1.